A 69-amino-acid chain; its full sequence is Alpha-elapitoxin-Lc2c (69 aa).

4 disulfides stabilise this stretch: C3-C20, C13-C41, C45-C56, and C57-C62.

This sequence belongs to the three-finger toxin family. Long-chain subfamily. Type II alpha-neurotoxin sub-subfamily. As to expression, expressed by the venom gland.

Its subcellular location is the secreted. Binds with high affinity to muscular nicotinic acetylcholine receptors (nAChRs), whereas it binds with a low affinity to neuronal alpha-7/CHRNA7 nAChRs. This Laticauda colubrina (Yellow-lipped sea krait) protein is Alpha-elapitoxin-Lc2c.